Consider the following 644-residue polypeptide: Chaperone protein DnaK (644 aa).

Position 199 is a phosphothreonine; by autocatalysis (T199). Residues 602-644 (LYAEQSAQQQGSAGATGGEQPKADKAADDGVVDAEFEEVKDDK) are disordered. Residues 604–614 (AEQSAQQQGSA) are compositionally biased toward low complexity. The segment covering 631-644 (GVVDAEFEEVKDDK) has biased composition (acidic residues).

The protein belongs to the heat shock protein 70 family.

In terms of biological role, acts as a chaperone. The sequence is that of Chaperone protein DnaK from Teredinibacter turnerae (strain ATCC 39867 / T7901).